The following is a 209-amino-acid chain: Transmembrane domain-containing protein TMIGD3 (209 aa).

A signal peptide spans 1–15 (MEFLLLLSLALFSDA). Residues 152-172 (SILIICILITSLGIIFIISHL) form a helical membrane-spanning segment. Residues 179–201 (QRNREVTGKSISRNPQASQGPSM) form a disordered region. Residues 187 to 201 (KSISRNPQASQGPSM) are compositionally biased toward polar residues.

It localises to the membrane. This chain is Transmembrane domain-containing protein TMIGD3 (Tmigd3), found in Mus musculus (Mouse).